Reading from the N-terminus, the 443-residue chain is UDP-N-acetylmuramate--L-alanine ligase (443 aa).

G110 to S116 lines the ATP pocket.

Belongs to the MurCDEF family.

The protein localises to the cytoplasm. It carries out the reaction UDP-N-acetyl-alpha-D-muramate + L-alanine + ATP = UDP-N-acetyl-alpha-D-muramoyl-L-alanine + ADP + phosphate + H(+). It functions in the pathway cell wall biogenesis; peptidoglycan biosynthesis. In terms of biological role, cell wall formation. This is UDP-N-acetylmuramate--L-alanine ligase from Streptococcus agalactiae serotype V (strain ATCC BAA-611 / 2603 V/R).